The sequence spans 177 residues: Large ribosomal subunit protein uL6 (177 aa).

Belongs to the universal ribosomal protein uL6 family. As to quaternary structure, part of the 50S ribosomal subunit.

Functionally, this protein binds to the 23S rRNA, and is important in its secondary structure. It is located near the subunit interface in the base of the L7/L12 stalk, and near the tRNA binding site of the peptidyltransferase center. The protein is Large ribosomal subunit protein uL6 of Pseudomonas putida (strain ATCC 700007 / DSM 6899 / JCM 31910 / BCRC 17059 / LMG 24140 / F1).